A 333-amino-acid polypeptide reads, in one-letter code: Cytosolic sulfotransferase 10 (333 aa).

76-81 is a binding site for 3'-phosphoadenylyl sulfate; that stretch reads KSGTTW. The Proton acceptor role is filled by His-146. Residues Arg-168, Ser-176, Tyr-234, and 299-301 contribute to the 3'-phosphoadenylyl sulfate site; that span reads RKG.

This sequence belongs to the sulfotransferase 1 family. Expressed in roots.

The protein resides in the cytoplasm. Sulfotransferase that utilizes 3'-phospho-5'-adenylyl sulfate (PAPS) as sulfonate donor to specifically catalyze the sulfate conjugation of brassinosteroids, including castasterone (CS), brassinolide (BL), related 24-epimers, and the naturally occurring (22R, 23R)-28-homobrassinosteroids. No activity on phenolic acids, desulfo-glucosinolates, flavonoids, steroids, gibberellic acids, cytokinins, phenylpropanoids, hydroxyjasmonates and coumarins. The chain is Cytosolic sulfotransferase 10 (SOT10) from Arabidopsis thaliana (Mouse-ear cress).